The chain runs to 186 residues: UPF0301 protein HI_0304 (186 aa).

This sequence belongs to the UPF0301 (AlgH) family.

The polypeptide is UPF0301 protein HI_0304 (Haemophilus influenzae (strain ATCC 51907 / DSM 11121 / KW20 / Rd)).